A 341-amino-acid polypeptide reads, in one-letter code: Very-long-chain 3-oxoacyl-CoA reductase (341 aa).

Residues 17–37 (ALYGALLLGVYKLTTFALSLV) form a helical membrane-spanning segment. NADP(+) contacts are provided by valine 63, aspartate 117, asparagine 144, tyrosine 218, lysine 222, valine 251, and serine 253. Residue tyrosine 218 is the Proton donor of the active site. The active-site Lowers pKa of active site Tyr is the lysine 222.

This sequence belongs to the short-chain dehydrogenases/reductases (SDR) family.

It localises to the endoplasmic reticulum membrane. It carries out the reaction a very-long-chain (3R)-3-hydroxyacyl-CoA + NADP(+) = a very-long-chain 3-oxoacyl-CoA + NADPH + H(+). It functions in the pathway lipid metabolism; fatty acid biosynthesis. Its function is as follows. Component of the microsomal membrane bound fatty acid elongation system, which produces the 26-carbon very long-chain fatty acids (VLCFA) from palmitate. Catalyzes the reduction of the 3-ketoacyl-CoA intermediate that is formed in each cycle of fatty acid elongation. VLCFAs serve as precursors for ceramide and sphingolipids. This Meyerozyma guilliermondii (strain ATCC 6260 / CBS 566 / DSM 6381 / JCM 1539 / NBRC 10279 / NRRL Y-324) (Yeast) protein is Very-long-chain 3-oxoacyl-CoA reductase.